The primary structure comprises 472 residues: Glutamate--tRNA ligase 2 (472 aa).

The 'HIGH' region signature appears at 12 to 22; it reads PSPSGLLHLGN. Positions 253–257 match the 'KMSKS' region motif; that stretch reads PLSKR. Lys-256 lines the ATP pocket.

This sequence belongs to the class-I aminoacyl-tRNA synthetase family. Glutamate--tRNA ligase type 1 subfamily. Monomer.

Its subcellular location is the cytoplasm. It carries out the reaction tRNA(Glu) + L-glutamate + ATP = L-glutamyl-tRNA(Glu) + AMP + diphosphate. Catalyzes the attachment of glutamate to tRNA(Glu) in a two-step reaction: glutamate is first activated by ATP to form Glu-AMP and then transferred to the acceptor end of tRNA(Glu). This is Glutamate--tRNA ligase 2 from Nitrosococcus oceani (strain ATCC 19707 / BCRC 17464 / JCM 30415 / NCIMB 11848 / C-107).